The chain runs to 188 residues: MKTAQEIRAGNVVMIGTEPMVVQKAEFNKSGRNSAVVKMKLKGLLNGSATETVFKADDKLEVVQLERKECTYSYFSDPLYVFMDTEYNQYDVEKDNLGDALNYMVDGMEDICEVTFYNEKAISVELPTTIVREVEYTEPAARGDTSGKVTKPARLKGTTYELAVAAFVEIGDKIEIDTRTGEFKRRVN.

The protein belongs to the elongation factor P family.

It localises to the cytoplasm. It participates in protein biosynthesis; polypeptide chain elongation. Involved in peptide bond synthesis. Stimulates efficient translation and peptide-bond synthesis on native or reconstituted 70S ribosomes in vitro. Probably functions indirectly by altering the affinity of the ribosome for aminoacyl-tRNA, thus increasing their reactivity as acceptors for peptidyl transferase. The polypeptide is Elongation factor P (Aeromonas hydrophila subsp. hydrophila (strain ATCC 7966 / DSM 30187 / BCRC 13018 / CCUG 14551 / JCM 1027 / KCTC 2358 / NCIMB 9240 / NCTC 8049)).